The sequence spans 238 residues: 2,3,4,5-tetrahydropyridine-2,6-dicarboxylate N-acetyltransferase (238 aa).

It belongs to the transferase hexapeptide repeat family. DapH subfamily.

It catalyses the reaction (S)-2,3,4,5-tetrahydrodipicolinate + acetyl-CoA + H2O = L-2-acetamido-6-oxoheptanedioate + CoA. It participates in amino-acid biosynthesis; L-lysine biosynthesis via DAP pathway; LL-2,6-diaminopimelate from (S)-tetrahydrodipicolinate (acetylase route): step 1/3. Functionally, catalyzes the transfer of an acetyl group from acetyl-CoA to tetrahydrodipicolinate. The sequence is that of 2,3,4,5-tetrahydropyridine-2,6-dicarboxylate N-acetyltransferase from Thermotoga neapolitana (strain ATCC 49049 / DSM 4359 / NBRC 107923 / NS-E).